A 477-amino-acid polypeptide reads, in one-letter code: Aspartyl/glutamyl-tRNA(Asn/Gln) amidotransferase subunit B (477 aa).

The protein belongs to the GatB/GatE family. GatB subfamily. As to quaternary structure, heterotrimer of A, B and C subunits.

The catalysed reaction is L-glutamyl-tRNA(Gln) + L-glutamine + ATP + H2O = L-glutaminyl-tRNA(Gln) + L-glutamate + ADP + phosphate + H(+). It catalyses the reaction L-aspartyl-tRNA(Asn) + L-glutamine + ATP + H2O = L-asparaginyl-tRNA(Asn) + L-glutamate + ADP + phosphate + 2 H(+). Allows the formation of correctly charged Asn-tRNA(Asn) or Gln-tRNA(Gln) through the transamidation of misacylated Asp-tRNA(Asn) or Glu-tRNA(Gln) in organisms which lack either or both of asparaginyl-tRNA or glutaminyl-tRNA synthetases. The reaction takes place in the presence of glutamine and ATP through an activated phospho-Asp-tRNA(Asn) or phospho-Glu-tRNA(Gln). The polypeptide is Aspartyl/glutamyl-tRNA(Asn/Gln) amidotransferase subunit B (Methylobacillus flagellatus (strain ATCC 51484 / DSM 6875 / VKM B-1610 / KT)).